The chain runs to 752 residues: Glutamate carboxypeptidase 2 (752 aa).

Residues methionine 1–arginine 22 are Cytoplasmic-facing. A Phosphoserine modification is found at serine 10. Residues valine 23–isoleucine 44 traverse the membrane as a helical; Signal-anchor for type II membrane protein segment. The Extracellular segment spans residues lysine 45–alanine 752. N-linked (GlcNAc...) asparagine glycosylation is found at asparagine 78, asparagine 123, and asparagine 155. Positions 212 and 259 each coordinate substrate. The Ca(2+) site is built by threonine 271 and tyrosine 274. The interval alanine 276–leucine 589 is NAALADase. Asparagine 338 carries an N-linked (GlcNAc...) asparagine glycan. 2 residues coordinate Zn(2+): histidine 379 and aspartate 389. Glutamate 426 lines the substrate pocket. Glutamate 426 functions as the Nucleophile; for NAALADase activity in the catalytic mechanism. Glutamate 427 lines the Zn(2+) pocket. Positions 435 and 438 each coordinate Ca(2+). Aspartate 455 serves as a coordination point for Zn(2+). N-linked (GlcNAc...) asparagine glycosylation is found at asparagine 461 and asparagine 478. Residues serine 519 to glycine 520, asparagine 521, arginine 536 to arginine 538, tyrosine 554, and tyrosine 554 to histidine 555 contribute to the substrate site. Residue histidine 555 participates in Zn(2+) binding. N-linked (GlcNAc...) asparagine glycosylation is present at asparagine 615. The active-site Charge relay system is the serine 630. The N-linked (GlcNAc...) asparagine glycan is linked to asparagine 640. Residues aspartate 668 and histidine 691 each act as charge relay system in the active site. Lysine 701–tyrosine 702 is a binding site for substrate. Asparagine 722 is a glycosylation site (N-linked (GlcNAc...) asparagine).

This sequence belongs to the peptidase M28 family. M28B subfamily. Homodimer. Zn(2+) is required as a cofactor. Expressed predominantly in the hippocampal region of the brain and in kidney. Lower levels in the ovary, testis and mandibular gland.

The protein localises to the cell membrane. The catalysed reaction is Release of an unsubstituted, C-terminal glutamyl residue, typically from Ac-Asp-Glu or folylpoly-gamma-glutamates.. Its activity is regulated as follows. The NAALADase and folate hydrolase activities are inhibited by quisqualic acid. Has both folate hydrolase and N-acetylated-alpha-linked-acidic dipeptidase (NAALADase) activity. Has a preference for tri-alpha-glutamate peptides. In the intestine, required for the uptake of folate. In the brain, modulates excitatory neurotransmission through the hydrolysis of the neuropeptide, N-aceylaspartylglutamate (NAAG), thereby releasing glutamate. In terms of biological role, also exhibits a dipeptidyl-peptidase IV type activity. In vitro, cleaves Gly-Pro-AMC. The chain is Glutamate carboxypeptidase 2 (Folh1) from Mus musculus (Mouse).